We begin with the raw amino-acid sequence, 331 residues long: Phosphoribosylformylglycinamidine cyclo-ligase (331 aa).

Belongs to the AIR synthase family.

It is found in the cytoplasm. It carries out the reaction 2-formamido-N(1)-(5-O-phospho-beta-D-ribosyl)acetamidine + ATP = 5-amino-1-(5-phospho-beta-D-ribosyl)imidazole + ADP + phosphate + H(+). It participates in purine metabolism; IMP biosynthesis via de novo pathway; 5-amino-1-(5-phospho-D-ribosyl)imidazole from N(2)-formyl-N(1)-(5-phospho-D-ribosyl)glycinamide: step 2/2. The chain is Phosphoribosylformylglycinamidine cyclo-ligase from Clostridium botulinum (strain 657 / Type Ba4).